We begin with the raw amino-acid sequence, 158 residues long: Aspartate carbamoyltransferase regulatory chain (158 aa).

Residues C111, C116, C140, and C143 each contribute to the Zn(2+) site.

This sequence belongs to the PyrI family. Contains catalytic and regulatory chains. The cofactor is Zn(2+).

In terms of biological role, involved in allosteric regulation of aspartate carbamoyltransferase. This is Aspartate carbamoyltransferase regulatory chain from Metallosphaera sedula (strain ATCC 51363 / DSM 5348 / JCM 9185 / NBRC 15509 / TH2).